The following is a 173-amino-acid chain: Alpha-crystallin A chain (173 aa).

M1 carries the N-acetylmethionine modification. Residues 1 to 63 (MDIAIQHPWF…RSVLDSGISE (63 aa)) form a required for complex formation with BFSP1 and BFSP2 region. At Q6 the chain carries Deamidated glutamine; partial. At S45 the chain carries Phosphoserine. Q50 is subject to Deamidated glutamine; partial. One can recognise a sHSP domain in the interval 52 to 162 (VFRSVLDSGI…GHSERAIPVS (111 aa)). N6-acetyllysine is present on residues K70 and K99. Residue H100 coordinates Zn(2+). N101 carries the deamidated asparagine; partial modification. Zn(2+) is bound by residues E102 and H107. S122 is modified (phosphoserine). N123 carries the deamidated asparagine; partial modification. The tract at residues 144–173 (PKVPSGVDAGHSERAIPVSREEKPSSAPSS) is disordered. Over residues 153–167 (GHSERAIPVSREEKP) the composition is skewed to basic and acidic residues. Residue H154 coordinates Zn(2+). Residue S162 is glycosylated (O-linked (GlcNAc) serine).

This sequence belongs to the small heat shock protein (HSP20) family. Heteromer composed of three CRYAA and one CRYAB subunits. Inter-subunit bridging via zinc ions enhances stability, which is crucial as there is no protein turn over in the lens. Can also form homodimers and homotetramers (dimers of dimers) which serve as the building blocks of homooligomers. Within homooligomers, the zinc-binding motif is created from residues of 3 different molecules. His-100 and Glu-102 from one molecule are ligands of the zinc ion, and His-107 and His-154 residues from additional molecules complete the site with tetrahedral coordination geometry. Part of a complex required for lens intermediate filament formation composed of BFSP1, BFSP2 and CRYAA. Post-translationally, acetylation at Lys-70 may increase chaperone activity. Undergoes age-dependent proteolytical cleavage at the C-terminus.

Its subcellular location is the cytoplasm. The protein resides in the nucleus. In terms of biological role, contributes to the transparency and refractive index of the lens. Acts as a chaperone, preventing aggregation of various proteins under a wide range of stress conditions. Required for the correct formation of lens intermediate filaments as part of a complex composed of BFSP1, BFSP2 and CRYAA. The polypeptide is Alpha-crystallin A chain (CRYAA) (Halichoerus grypus (Gray seal)).